Reading from the N-terminus, the 202-residue chain is Secreted RxLR effector protein 11 (202 aa).

Positions 1 to 23 are cleaved as a signal peptide; it reads MRLNFTKLFAGAVALAWTTESMA. A RxLR-dEER motif is present at residues 49-61; sequence RRLRTINGADEER.

This sequence belongs to the RxLR effector family.

It localises to the secreted. The protein resides in the host cytoplasm. It is found in the host nucleus. Effector that acts as a broad suppressor of cell death to interrupt plant immunity. Inhibits cell death induced by cell death-inducing proteins, including the PAMP elicitor INF1 from P.infestans. The sequence is that of Secreted RxLR effector protein 11 from Plasmopara viticola (Downy mildew of grapevine).